Reading from the N-terminus, the 454-residue chain is Bifunctional protein GlmU (454 aa).

A pyrophosphorylase region spans residues 1 to 226; that stretch reads MSTTVIILAA…AFEVEGVNDR (226 aa). UDP-N-acetyl-alpha-D-glucosamine is bound by residues 8-11, Lys22, Gln73, 78-79, 100-102, Gly137, Glu151, Asn166, and Asn224; these read LAAG, GT, and YGD. Residue Asp102 coordinates Mg(2+). Asn224 is a Mg(2+) binding site. The interval 227 to 247 is linker; that stretch reads LQLAALEREFQKQQAKELMQQ. Positions 248 to 454 are N-acetyltransferase; sequence GVTFADPARF…NYQRPQKLKK (207 aa). The UDP-N-acetyl-alpha-D-glucosamine site is built by Arg330 and Lys348. His360 functions as the Proton acceptor in the catalytic mechanism. Residues Tyr363 and Asn374 each contribute to the UDP-N-acetyl-alpha-D-glucosamine site. Residues Ala377, 383 to 384, Ser402, Ala420, and Arg437 each bind acetyl-CoA; that span reads NY.

The protein in the N-terminal section; belongs to the N-acetylglucosamine-1-phosphate uridyltransferase family. In the C-terminal section; belongs to the transferase hexapeptide repeat family. As to quaternary structure, homotrimer. Mg(2+) is required as a cofactor.

The protein resides in the cytoplasm. It catalyses the reaction alpha-D-glucosamine 1-phosphate + acetyl-CoA = N-acetyl-alpha-D-glucosamine 1-phosphate + CoA + H(+). It carries out the reaction N-acetyl-alpha-D-glucosamine 1-phosphate + UTP + H(+) = UDP-N-acetyl-alpha-D-glucosamine + diphosphate. The protein operates within nucleotide-sugar biosynthesis; UDP-N-acetyl-alpha-D-glucosamine biosynthesis; N-acetyl-alpha-D-glucosamine 1-phosphate from alpha-D-glucosamine 6-phosphate (route II): step 2/2. Its pathway is nucleotide-sugar biosynthesis; UDP-N-acetyl-alpha-D-glucosamine biosynthesis; UDP-N-acetyl-alpha-D-glucosamine from N-acetyl-alpha-D-glucosamine 1-phosphate: step 1/1. It participates in bacterial outer membrane biogenesis; LPS lipid A biosynthesis. Catalyzes the last two sequential reactions in the de novo biosynthetic pathway for UDP-N-acetylglucosamine (UDP-GlcNAc). The C-terminal domain catalyzes the transfer of acetyl group from acetyl coenzyme A to glucosamine-1-phosphate (GlcN-1-P) to produce N-acetylglucosamine-1-phosphate (GlcNAc-1-P), which is converted into UDP-GlcNAc by the transfer of uridine 5-monophosphate (from uridine 5-triphosphate), a reaction catalyzed by the N-terminal domain. This Acinetobacter baumannii (strain ACICU) protein is Bifunctional protein GlmU.